Here is a 181-residue protein sequence, read N- to C-terminus: Probable pyruvoyl-dependent arginine decarboxylase (181 aa).

Ser-43 carries the pyruvic acid (Ser) modification.

It belongs to the PdaD family. Pyruvate is required as a cofactor.

The enzyme catalyses L-arginine + H(+) = agmatine + CO2. The chain is Probable pyruvoyl-dependent arginine decarboxylase from Chlorobium phaeovibrioides (strain DSM 265 / 1930) (Prosthecochloris vibrioformis (strain DSM 265)).